The sequence spans 696 residues: ATP-dependent zinc metalloprotease FtsH (696 aa).

Over 1–29 the chain is Cytoplasmic; it reads MWLQVTNCSTLHSSLSYCGANTLSDMAKN. A helical membrane pass occupies residues 30–50; the sequence is LILWLVIAVVLMSVFQSFGPS. Residues 51-124 lie on the Periplasmic side of the membrane; it reads DSAGRQVDYT…LGTPPEEPSL (74 aa). A helical membrane pass occupies residues 125 to 145; sequence LASIFISWFPMLLLIGVWVFF. Over 146 to 696 the chain is Cytoplasmic; the sequence is MRQMQGGGGG…APKEDDKPQA (551 aa). Residue 219–226 participates in ATP binding; the sequence is GPPGTGKT. Residue His441 participates in Zn(2+) binding. The active site involves Glu442. His445 and Asp519 together coordinate Zn(2+). Residues 627 to 696 are disordered; it reads RAPKGWGDTD…APKEDDKPQA (70 aa). Residues 650–696 show a composition bias toward basic and acidic residues; it reads PEAKTESAPEAKAEANVETEEKPVAADSEELKPKAEQAPKEDDKPQA.

In the central section; belongs to the AAA ATPase family. This sequence in the C-terminal section; belongs to the peptidase M41 family. In terms of assembly, homohexamer. Requires Zn(2+) as cofactor.

Its subcellular location is the cell inner membrane. Functionally, acts as a processive, ATP-dependent zinc metallopeptidase for both cytoplasmic and membrane proteins. Plays a role in the quality control of integral membrane proteins. This Photobacterium profundum (strain SS9) protein is ATP-dependent zinc metalloprotease FtsH.